A 183-amino-acid chain; its full sequence is Mitochondrial import inner membrane translocase subunit tim17 (183 aa).

3 helical membrane-spanning segments follow: residues 13–33 (AGGA…GLGF), 57–77 (GGNF…LSYI), and 107–127 (VQAA…QHMM). Polar residues predominate over residues 131 to 141 (MQAQQEEMTQQ). Residues 131-183 (MQAQQEEMTQQHLEERKRYEEERKQREGERKKLNENGKSKKNKQQQNGENDLD) form a disordered region. Residues 142 to 168 (HLEERKRYEEERKQREGERKKLNENGK) show a composition bias toward basic and acidic residues. Low complexity predominate over residues 174–183 (QQQNGENDLD).

The protein belongs to the Tim17/Tim22/Tim23 family.

The protein resides in the mitochondrion inner membrane. May be involved in the translocation of transit peptide-containing proteins across the mitochondrial inner membrane. The polypeptide is Mitochondrial import inner membrane translocase subunit tim17 (timm17) (Dictyostelium discoideum (Social amoeba)).